A 205-amino-acid polypeptide reads, in one-letter code: UPF0548 protein At2g17695 (205 aa).

The protein belongs to the UPF0548 family.

This is UPF0548 protein At2g17695 from Arabidopsis thaliana (Mouse-ear cress).